A 115-amino-acid chain; its full sequence is NADH-ubiquinone oxidoreductase chain 3 (115 aa).

The next 3 helical transmembrane spans lie at 3–23 (LALA…ITFW), 55–75 (FFLV…LLPL), and 86–106 (LTIA…AYEW).

This sequence belongs to the complex I subunit 3 family. As to quaternary structure, core subunit of respiratory chain NADH dehydrogenase (Complex I) which is composed of 45 different subunits. Interacts with TMEM186. Interacts with TMEM242.

The protein localises to the mitochondrion inner membrane. It carries out the reaction a ubiquinone + NADH + 5 H(+)(in) = a ubiquinol + NAD(+) + 4 H(+)(out). Functionally, core subunit of the mitochondrial membrane respiratory chain NADH dehydrogenase (Complex I) which catalyzes electron transfer from NADH through the respiratory chain, using ubiquinone as an electron acceptor. Essential for the catalytic activity of complex I. This chain is NADH-ubiquinone oxidoreductase chain 3, found in Hylobates lar (Lar gibbon).